Here is a 409-residue protein sequence, read N- to C-terminus: Glucose-1-phosphate adenylyltransferase (409 aa).

Residues Gly-168, 183–184 (EK), and Ser-201 contribute to the alpha-D-glucose 1-phosphate site.

The protein belongs to the bacterial/plant glucose-1-phosphate adenylyltransferase family. In terms of assembly, homotetramer.

It carries out the reaction alpha-D-glucose 1-phosphate + ATP + H(+) = ADP-alpha-D-glucose + diphosphate. It participates in glycan biosynthesis; glycogen biosynthesis. Its function is as follows. Involved in the biosynthesis of ADP-glucose, a building block required for the elongation reactions to produce glycogen. Catalyzes the reaction between ATP and alpha-D-glucose 1-phosphate (G1P) to produce pyrophosphate and ADP-Glc. This chain is Glucose-1-phosphate adenylyltransferase, found in Corynebacterium efficiens (strain DSM 44549 / YS-314 / AJ 12310 / JCM 11189 / NBRC 100395).